The primary structure comprises 681 residues: RNA polymerase sigma factor RpoD (681 aa).

2 disordered regions span residues 1–60 (MKKK…ETAK) and 239–270 (DDDENSVSDPKKDDDSEEDEENEERKKVVSEK). Residues 261–270 (EERKKVVSEK) are compositionally biased toward basic and acidic residues. The sigma-70 factor domain-2 stretch occupies residues 446 to 516 (MAKSNLRLVV…SRAIADQART (71 aa)). The short motif at 470–473 (DLIQ) is the Interaction with polymerase core subunit RpoC element. The sigma-70 factor domain-3 stretch occupies residues 525–601 (DTINRINKVM…DKNIVSSIDH (77 aa)). Positions 614 to 668 (VLDQLNEREKAVIRMRFGLLDDESDRTLEEIGKELNVTRERVRQIESSAIKKLRS) are sigma-70 factor domain-4. The H-T-H motif DNA-binding region spans 641-660 (LEEIGKELNVTRERVRQIES).

Belongs to the sigma-70 factor family. RpoD/SigA subfamily. As to quaternary structure, interacts transiently with the RNA polymerase catalytic core.

It localises to the cytoplasm. Its function is as follows. Sigma factors are initiation factors that promote the attachment of RNA polymerase to specific initiation sites and are then released. This sigma factor is the primary sigma factor during exponential growth. The sequence is that of RNA polymerase sigma factor RpoD from Helicobacter pylori (strain J99 / ATCC 700824) (Campylobacter pylori J99).